The primary structure comprises 352 residues: PDZ and LIM domain protein 2 (352 aa).

The 84-residue stretch at 1–84 (MALTVDVAGP…PLRLQLDRSQ (84 aa)) folds into the PDZ domain. Disordered stretches follow at residues 67-97 (SKIR…DSSL) and 111-149 (YTES…TGEA). The span at 81 to 95 (DRSQATSPGQTNGDS) shows a compositional bias: polar residues. The segment covering 111-135 (YTESQSSLRSSYSSPTSLSPRAGSP) has biased composition (low complexity). Ser124 is modified (phosphoserine). Thr126 carries the post-translational modification Phosphothreonine. Ser127, Ser129, Ser134, Ser137, Ser143, Ser161, Ser197, Ser203, Ser213, and Ser266 each carry phosphoserine. Residues 170-213 (LSYSGRPGSRQAGLGRAGDSAVLVLPPSPGPRSSRPSMDSEGGS) are disordered. Positions 284-344 (HTCEKCSTSI…EKHARQRYSA (61 aa)) constitute an LIM zinc-binding domain.

Interacts with alpha-actinins ACTN1 and ACTN4, FLNA and MYH9. Interacts (via LIM zinc-binding domain) with MKRN2.

It is found in the cytoplasm. The protein resides in the nucleus. The protein localises to the cytoskeleton. Its function is as follows. Probable adapter protein located at the actin cytoskeleton that promotes cell attachment. Necessary for the migratory capacity of epithelial cells. Overexpression enhances cell adhesion to collagen and fibronectin and suppresses anchorage independent growth. May contribute to tumor cell migratory capacity. This chain is PDZ and LIM domain protein 2 (PDLIM2), found in Homo sapiens (Human).